The primary structure comprises 165 residues: Cathelicidin-7 (165 aa).

The N-terminal stretch at 1 to 29 (METQRASFSLGRSSLWLLLLGLVVPSASA) is a signal peptide. Residues 30–130 (QDLSYREAVL…FDITCNNIQS (101 aa)) constitute a propeptide that is removed on maturation. 2 disulfide bridges follow: Cys86–Cys97 and Cys108–Cys125. An Arginine amide modification is found at Arg164.

This sequence belongs to the cathelicidin family. In terms of tissue distribution, expressed in bone marrow myeloid cells, spleen and testis.

It localises to the secreted. Functionally, exerts a potent antimicrobial activity. This chain is Cathelicidin-7 (CATHL7), found in Bos taurus (Bovine).